The primary structure comprises 92 residues: Co-chaperonin GroES (92 aa).

It belongs to the GroES chaperonin family. In terms of assembly, heptamer of 7 subunits arranged in a ring. Interacts with the chaperonin GroEL.

The protein resides in the cytoplasm. Together with the chaperonin GroEL, plays an essential role in assisting protein folding. The GroEL-GroES system forms a nano-cage that allows encapsulation of the non-native substrate proteins and provides a physical environment optimized to promote and accelerate protein folding. GroES binds to the apical surface of the GroEL ring, thereby capping the opening of the GroEL channel. The polypeptide is Co-chaperonin GroES (Thermotoga neapolitana).